A 165-amino-acid polypeptide reads, in one-letter code: Nascent polypeptide-associated complex subunit beta (165 aa).

The 65-residue stretch at 33–97 folds into the NAC-A/B domain; it reads TTDDKRLQST…PQTKKLQDIL (65 aa). A disordered region spans residues 120 to 165; it reads QKQAPGAGDVPATIQEEDDDDDVPDLVVGETFETPATEEAPKAAAS. The segment covering 134–143 has biased composition (acidic residues); it reads QEEDDDDDVP. Over residues 144-165 the composition is skewed to low complexity; sequence DLVVGETFETPATEEAPKAAAS.

The protein belongs to the NAC-beta family. As to quaternary structure, part of the nascent polypeptide-associated complex (NAC).

In Arabidopsis thaliana (Mouse-ear cress), this protein is Nascent polypeptide-associated complex subunit beta.